The sequence spans 97 residues: Lipolysis-activating peptide 1-alpha chain (97 aa).

An N-terminal signal peptide occupies residues 1 to 21 (MNIMLFCSVFILVSLTGLSVS). The LCN-type CS-alpha/beta domain maps to 25-88 (PGNYPMSLYG…FWAAHKNHCK (64 aa)). Disulfide bonds link cysteine 39–cysteine 62, cysteine 48–cysteine 67, and cysteine 52–cysteine 69.

It belongs to the long (3 C-C) scorpion toxin superfamily. In terms of assembly, monomer (edited version) and heterodimer (non-edited version) of this alpha chain and a beta chain (AC P0CI43). In terms of tissue distribution, expressed by the venom gland.

The protein resides in the secreted. In terms of biological role, the heterodimer non-edited LVP1 induces lipolysis in rat adipocytes. Induction of lipolysis by LVP1 appears to be mediated through the beta-2 adrenergic receptor pathway (ADRB2). Functionally, the edited BmKBTx-like, similar to beta-toxins, may modulate voltage-gated sodium channels (Nav) and may block voltage-gated potassium channels (Kv). This chain is Lipolysis-activating peptide 1-alpha chain, found in Lychas mucronatus (Chinese swimming scorpion).